Consider the following 458-residue polypeptide: Ribulose bisphosphate carboxylase large chain (458 aa).

The residue at position 7 (lysine 7) is an N6,N6,N6-trimethyllysine. Substrate contacts are provided by asparagine 116 and threonine 166. Lysine 168 functions as the Proton acceptor in the catalytic mechanism. Position 170 (lysine 170) interacts with substrate. Positions 194, 196, and 197 each coordinate Mg(2+). Position 194 is an N6-carboxylysine (lysine 194). Catalysis depends on histidine 287, which acts as the Proton acceptor. Substrate is bound by residues arginine 288, histidine 320, and serine 372.

This sequence belongs to the RuBisCO large chain family. Type I subfamily. In terms of assembly, heterohexadecamer of 8 large chains and 8 small chains; disulfide-linked. The disulfide link is formed within the large subunit homodimers. It depends on Mg(2+) as a cofactor. Post-translationally, the disulfide bond which can form in the large chain dimeric partners within the hexadecamer appears to be associated with oxidative stress and protein turnover.

It is found in the plastid. It localises to the chloroplast. It carries out the reaction 2 (2R)-3-phosphoglycerate + 2 H(+) = D-ribulose 1,5-bisphosphate + CO2 + H2O. It catalyses the reaction D-ribulose 1,5-bisphosphate + O2 = 2-phosphoglycolate + (2R)-3-phosphoglycerate + 2 H(+). In terms of biological role, ruBisCO catalyzes two reactions: the carboxylation of D-ribulose 1,5-bisphosphate, the primary event in carbon dioxide fixation, as well as the oxidative fragmentation of the pentose substrate in the photorespiration process. Both reactions occur simultaneously and in competition at the same active site. The protein is Ribulose bisphosphate carboxylase large chain of Gladiolus gueinzii (Coastal gladiolus).